The following is a 120-amino-acid chain: Large ribosomal subunit protein uL18 (120 aa).

This sequence belongs to the universal ribosomal protein uL18 family. In terms of assembly, part of the 50S ribosomal subunit; part of the 5S rRNA/L5/L18/L25 subcomplex. Contacts the 5S and 23S rRNAs.

Its function is as follows. This is one of the proteins that bind and probably mediate the attachment of the 5S RNA into the large ribosomal subunit, where it forms part of the central protuberance. In Bacillus pumilus (strain SAFR-032), this protein is Large ribosomal subunit protein uL18.